A 310-amino-acid chain; its full sequence is tRNA-cytidine(32) 2-sulfurtransferase (310 aa).

The PP-loop motif motif lies at 58 to 63; it reads SGGKDS. [4Fe-4S] cluster contacts are provided by Cys-133, Cys-136, and Cys-224.

This sequence belongs to the TtcA family. In terms of assembly, homodimer. Requires Mg(2+) as cofactor. The cofactor is [4Fe-4S] cluster.

It is found in the cytoplasm. It carries out the reaction cytidine(32) in tRNA + S-sulfanyl-L-cysteinyl-[cysteine desulfurase] + AH2 + ATP = 2-thiocytidine(32) in tRNA + L-cysteinyl-[cysteine desulfurase] + A + AMP + diphosphate + H(+). It functions in the pathway tRNA modification. Catalyzes the ATP-dependent 2-thiolation of cytidine in position 32 of tRNA, to form 2-thiocytidine (s(2)C32). The sulfur atoms are provided by the cysteine/cysteine desulfurase (IscS) system. In Paracidovorax citrulli (strain AAC00-1) (Acidovorax citrulli), this protein is tRNA-cytidine(32) 2-sulfurtransferase.